The chain runs to 119 residues: uncharacterized protein (119 aa).

The protein resides in the mitochondrion. Its subcellular location is the nucleus. This is an uncharacterized protein from Schizosaccharomyces pombe (strain 972 / ATCC 24843) (Fission yeast).